The chain runs to 279 residues: 2-dehydro-3-deoxyphosphooctonate aldolase (279 aa).

It belongs to the KdsA family.

The protein localises to the cytoplasm. The enzyme catalyses D-arabinose 5-phosphate + phosphoenolpyruvate + H2O = 3-deoxy-alpha-D-manno-2-octulosonate-8-phosphate + phosphate. It participates in carbohydrate biosynthesis; 3-deoxy-D-manno-octulosonate biosynthesis; 3-deoxy-D-manno-octulosonate from D-ribulose 5-phosphate: step 2/3. The protein operates within bacterial outer membrane biogenesis; lipopolysaccharide biosynthesis. The sequence is that of 2-dehydro-3-deoxyphosphooctonate aldolase from Azoarcus sp. (strain BH72).